The following is a 30-amino-acid chain: Snaclec coagulation factor IX/factor X-binding protein subunit A (30 aa).

The 30-residue stretch at 1 to 30 (DCPSDWSPYEGHCYKHFIKWMNNEDAERFC) folds into the C-type lectin domain. The cysteines at positions 2 and 13 are disulfide-linked.

The protein belongs to the snaclec family. In terms of assembly, heterodimer of subunits A and B; disulfide-linked. As to expression, expressed by the venom gland.

Its subcellular location is the secreted. Its function is as follows. Anticoagulant protein which binds to the gamma-carboxyglutamic acid-domain regions of factors IX (F9) and factor X (F10) in the presence of calcium with a 1 to 1 stoichiometry. The chain is Snaclec coagulation factor IX/factor X-binding protein subunit A from Bothrops jararaca (Jararaca).